The sequence spans 331 residues: 2-hydroxyacid dehydrogenase homolog (331 aa).

NAD(+)-binding positions include 154-155 (KI), 232-234 (TSR), and aspartate 258. Residue arginine 234 is part of the active site. Glutamate 263 is an active-site residue. Histidine 295 acts as the Proton donor in catalysis. 295–298 (HQAF) provides a ligand contact to NAD(+).

This sequence belongs to the D-isomer specific 2-hydroxyacid dehydrogenase family.

This chain is 2-hydroxyacid dehydrogenase homolog (ddh), found in Haemophilus influenzae (strain ATCC 51907 / DSM 11121 / KW20 / Rd).